Reading from the N-terminus, the 290-residue chain is Probable 2-(5''-triphosphoribosyl)-3'-dephosphocoenzyme-A synthase (290 aa).

This sequence belongs to the CitG/MdcB family.

The catalysed reaction is 3'-dephospho-CoA + ATP = 2'-(5''-triphospho-alpha-D-ribosyl)-3'-dephospho-CoA + adenine. In terms of biological role, involved in the formation of 2-(5''-phosphoribosyl)-3'-dephosphocoenzyme-A, the prosthetic group of the acyl-carrier protein of the malonate decarboxylase. This Pseudomonas fluorescens (strain Pf0-1) protein is Probable 2-(5''-triphosphoribosyl)-3'-dephosphocoenzyme-A synthase.